The sequence spans 140 residues: Nucleoside diphosphate kinase (140 aa).

ATP contacts are provided by K11, F59, R87, T93, R104, and N114. Catalysis depends on H117, which acts as the Pros-phosphohistidine intermediate.

The protein belongs to the NDK family. In terms of assembly, homotetramer. Requires Mg(2+) as cofactor.

It is found in the cytoplasm. It carries out the reaction a 2'-deoxyribonucleoside 5'-diphosphate + ATP = a 2'-deoxyribonucleoside 5'-triphosphate + ADP. It catalyses the reaction a ribonucleoside 5'-diphosphate + ATP = a ribonucleoside 5'-triphosphate + ADP. Its function is as follows. Major role in the synthesis of nucleoside triphosphates other than ATP. The ATP gamma phosphate is transferred to the NDP beta phosphate via a ping-pong mechanism, using a phosphorylated active-site intermediate. The chain is Nucleoside diphosphate kinase from Rhizobium rhizogenes (strain K84 / ATCC BAA-868) (Agrobacterium radiobacter).